The chain runs to 119 residues: Large ribosomal subunit protein uL22 (119 aa).

The protein belongs to the universal ribosomal protein uL22 family. In terms of assembly, part of the 50S ribosomal subunit.

In terms of biological role, this protein binds specifically to 23S rRNA; its binding is stimulated by other ribosomal proteins, e.g. L4, L17, and L20. It is important during the early stages of 50S assembly. It makes multiple contacts with different domains of the 23S rRNA in the assembled 50S subunit and ribosome. Functionally, the globular domain of the protein is located near the polypeptide exit tunnel on the outside of the subunit, while an extended beta-hairpin is found that lines the wall of the exit tunnel in the center of the 70S ribosome. This Rickettsia canadensis (strain McKiel) protein is Large ribosomal subunit protein uL22.